The following is a 247-amino-acid chain: uncharacterized protein (247 aa).

Residues 1–35 (MWGPGVTAEGLSVAPAPPPLLPLLLLLALALVAPS) form the signal peptide. The chain crosses the membrane as a helical span at residues 82–102 (LSGLLILLVLFAIGYFLQRII). Residues 109–176 (YPRGQARPGQ…RGSGGRLPPS (68 aa)) are disordered. Over residues 111 to 120 (RGQARPGQAR) the composition is skewed to low complexity. Gly residues predominate over residues 161–171 (SGGGRGRGSGG).

Its subcellular location is the membrane. This is an uncharacterized protein from Mus musculus (Mouse).